A 183-amino-acid chain; its full sequence is ATP synthase subunit delta, chloroplastic (183 aa).

It belongs to the ATPase delta chain family. F-type ATPases have 2 components, F(1) - the catalytic core - and F(0) - the membrane proton channel. F(1) has five subunits: alpha(3), beta(3), gamma(1), delta(1), epsilon(1). CF(0) has four main subunits: a(1), b(1), b'(1) and c(10-14). The alpha and beta chains form an alternating ring which encloses part of the gamma chain. F(1) is attached to F(0) by a central stalk formed by the gamma and epsilon chains, while a peripheral stalk is formed by the delta, b and b' chains.

It localises to the plastid. Its subcellular location is the chloroplast thylakoid membrane. Functionally, f(1)F(0) ATP synthase produces ATP from ADP in the presence of a proton or sodium gradient. F-type ATPases consist of two structural domains, F(1) containing the extramembraneous catalytic core and F(0) containing the membrane proton channel, linked together by a central stalk and a peripheral stalk. During catalysis, ATP synthesis in the catalytic domain of F(1) is coupled via a rotary mechanism of the central stalk subunits to proton translocation. This protein is part of the stalk that links CF(0) to CF(1). It either transmits conformational changes from CF(0) to CF(1) or is implicated in proton conduction. The chain is ATP synthase subunit delta, chloroplastic from Cyanidium caldarium (Red alga).